Here is a 126-residue protein sequence, read N- to C-terminus: Fluoride-specific ion channel FluC (126 aa).

Transmembrane regions (helical) follow at residues 4 to 24 (SILA…FLGL), 36 to 56 (GTLA…ALFA), 68 to 88 (LIIT…AEVV), and 99 to 119 (AFAA…AGIA). Na(+) is bound by residues Gly75 and Thr78.

This sequence belongs to the fluoride channel Fluc/FEX (TC 1.A.43) family.

It is found in the cell inner membrane. The enzyme catalyses fluoride(in) = fluoride(out). Na(+) is not transported, but it plays an essential structural role and its presence is essential for fluoride channel function. In terms of biological role, fluoride-specific ion channel. Important for reducing fluoride concentration in the cell, thus reducing its toxicity. The polypeptide is Fluoride-specific ion channel FluC (Chromobacterium violaceum (strain ATCC 12472 / DSM 30191 / JCM 1249 / CCUG 213 / NBRC 12614 / NCIMB 9131 / NCTC 9757 / MK)).